Reading from the N-terminus, the 441-residue chain is Actin-related protein 4 (441 aa).

A disordered region spans residues V48–R73. Over residues E60–K70 the composition is skewed to basic and acidic residues.

It belongs to the actin family. ARP4 subfamily. Component of the SWR1 chromatin-remodeling complex and of the NuA4 histone acetyltransferase complex. Interacts with the SWI/SNF complex. Interacts with EAF1A and EAF1B. As to expression, mostly expressed in flowers, and, to a lower extent, in roots, seedlings, leaves and siliques (at protein level).

It is found in the nucleus. The protein resides in the cytoplasm. Functionally, involved in several developmental processes including organization of plant organs, flowering time, anther development, flower senescence and fertility, probably by regulating the chromatin structure. The polypeptide is Actin-related protein 4 (Arabidopsis thaliana (Mouse-ear cress)).